Reading from the N-terminus, the 72-residue chain is Protein LITTLE ZIPPER 4 (72 aa).

The stretch at 14-44 (YIIKENERLRKKAQILNQENQQLLFELKQKL) forms a coiled coil. Residues 42 to 72 (QKLSKTKNSSGSNQGNNNNNNNLSSSSSASG) are disordered. The span at 49-72 (NSSGSNQGNNNNNNNLSSSSSASG) shows a compositional bias: low complexity.

In terms of assembly, interacts with REV.

Functionally, competitive inhibitor of the HD-ZIPIII transcription factors in shoot apical meristem (SAM) development. Acts by forming non-functional heterodimers. Part of a negative feedback loop. Essential for proper functioning of stem cells in the SAM. The protein is Protein LITTLE ZIPPER 4 of Arabidopsis thaliana (Mouse-ear cress).